We begin with the raw amino-acid sequence, 772 residues long: RNA exonuclease 5 (772 aa).

Positions 1–10 are enriched in basic and acidic residues; that stretch reads MEPEREGTER. The disordered stretch occupies residues 1-26; it reads MEPEREGTERHPRKVRKRRQAPNKLV. Over residues 11 to 21 the composition is skewed to basic residues; that stretch reads HPRKVRKRRQA. The region spanning 228–376 is the Exonuclease domain; it reads LFGLDCEMCL…EDARIILELA (149 aa). 2 consecutive RRM domains span residues 505–579 and 600–679; these read STVY…RPVT and GSIY…RHLH.

This chain is RNA exonuclease 5 (REXO5), found in Macaca fascicularis (Crab-eating macaque).